We begin with the raw amino-acid sequence, 154 residues long: Large ribosomal subunit protein uL22c (154 aa).

Belongs to the universal ribosomal protein uL22 family. In terms of assembly, part of the 50S ribosomal subunit.

Its subcellular location is the plastid. It localises to the chloroplast. Functionally, this protein binds specifically to 23S rRNA. In terms of biological role, the globular domain of the protein is located near the polypeptide exit tunnel on the outside of the subunit, while an extended beta-hairpin is found that lines the wall of the exit tunnel in the center of the 70S ribosome. This is Large ribosomal subunit protein uL22c (rpl22) from Helianthus annuus (Common sunflower).